A 475-amino-acid polypeptide reads, in one-letter code: Aspartyl/glutamyl-tRNA(Asn/Gln) amidotransferase subunit B (475 aa).

The protein belongs to the GatB/GatE family. GatB subfamily. In terms of assembly, heterotrimer of A, B and C subunits.

The catalysed reaction is L-glutamyl-tRNA(Gln) + L-glutamine + ATP + H2O = L-glutaminyl-tRNA(Gln) + L-glutamate + ADP + phosphate + H(+). The enzyme catalyses L-aspartyl-tRNA(Asn) + L-glutamine + ATP + H2O = L-asparaginyl-tRNA(Asn) + L-glutamate + ADP + phosphate + 2 H(+). Functionally, allows the formation of correctly charged Asn-tRNA(Asn) or Gln-tRNA(Gln) through the transamidation of misacylated Asp-tRNA(Asn) or Glu-tRNA(Gln) in organisms which lack either or both of asparaginyl-tRNA or glutaminyl-tRNA synthetases. The reaction takes place in the presence of glutamine and ATP through an activated phospho-Asp-tRNA(Asn) or phospho-Glu-tRNA(Gln). In Bacillus thuringiensis subsp. konkukian (strain 97-27), this protein is Aspartyl/glutamyl-tRNA(Asn/Gln) amidotransferase subunit B.